Reading from the N-terminus, the 485-residue chain is Glucagon receptor (485 aa).

The signal sequence occupies residues 1-26 (MLLTQLHCPYLLLLLVVLSCLPKAPS). At 27–137 (AQVMDFLFEK…EIEVQKGVAK (111 aa)) the chain is on the extracellular side. Cystine bridges form between Cys-44–Cys-68, Cys-59–Cys-101, and Cys-82–Cys-122. N-linked (GlcNAc...) asparagine glycans are attached at residues Asn-47, Asn-60, Asn-75, and Asn-79. Residues 138–162 (MYSSYQVMYTVGYSLSLGALLLALV) traverse the membrane as a helical segment. Topologically, residues 163–174 (ILLGLRKLHCTR) are cytoplasmic. The chain crosses the membrane as a helical span at residues 175–199 (NYIHGNLFASFVLKAGSVLVIDWLL). The Extracellular portion of the chain corresponds to 200–226 (KTRYSQKIGDDLSVSVWLSDGAVAGCR). The cysteines at positions 225 and 295 are disulfide-linked. The chain crosses the membrane as a helical span at residues 227–250 (VATVIMQYGIIANYCWLLVEGVYL). Over 251 to 264 (YSLLSITTFSEKSF) the chain is Cytoplasmic. Residues 265-286 (FSLYLCIGWGSPLLFVIPWVVV) traverse the membrane as a helical segment. The Extracellular segment spans residues 287–304 (KCLFENVQCWTSNDNMGF). The chain crosses the membrane as a helical span at residues 305–327 (WWILRIPVLLAILINFFIFVRII). Residues 328 to 351 (HLLVAKLRAHQMHYADYKFRLARS) lie on the Cytoplasmic side of the membrane. The interval 351-354 (STLT) is important for allosteric inhibitor binding. A helical membrane pass occupies residues 352 to 370 (TLTLIPLLGVHEVVFAFVT). Over 371 to 382 (DEHAQGTLRSTK) the chain is Extracellular. The helical transmembrane segment at 383-403 (LFFDLFFSSFQGLLVAVLYCF) threads the bilayer. Over 404-485 (LNKEVQAELL…SLPRLADSPT (82 aa)) the chain is Cytoplasmic. A disordered region spans residues 455-485 (MSAGSSSGTGCEPSAKTSLASSLPRLADSPT). Polar residues predominate over residues 456 to 475 (SAGSSSGTGCEPSAKTSLAS). Phosphoserine occurs at positions 460 and 476.

The protein belongs to the G-protein coupled receptor 2 family. In terms of processing, ligand-binding promotes phosphorylation of serine residues in the C-terminal cytoplasmic domain. Phosphorylation is important for receptor endocytosis after ligand-binding.

Its subcellular location is the cell membrane. Its function is as follows. G-protein coupled receptor for glucagon that plays a central role in the regulation of blood glucose levels and glucose homeostasis. Regulates the rate of hepatic glucose production by promoting glycogen hydrolysis and gluconeogenesis. Plays an important role in mediating the responses to fasting. Ligand binding causes a conformation change that triggers signaling via guanine nucleotide-binding proteins (G proteins) and modulates the activity of down-stream effectors, such as adenylate cyclase. Promotes activation of adenylate cyclase. Besides, plays a role in signaling via a phosphatidylinositol-calcium second messenger system. The polypeptide is Glucagon receptor (Gcgr) (Rattus norvegicus (Rat)).